The following is a 354-amino-acid chain: Biotin synthase (354 aa).

Positions 41–265 constitute a Radical SAM core domain; the sequence is NEVQISRLLS…IMPHSRVRLS (225 aa). Cys-56, Cys-60, and Cys-63 together coordinate [4Fe-4S] cluster. [2Fe-2S] cluster contacts are provided by Cys-100, Cys-131, Cys-191, and Arg-263.

This sequence belongs to the radical SAM superfamily. Biotin synthase family. As to quaternary structure, homodimer. [4Fe-4S] cluster is required as a cofactor. [2Fe-2S] cluster serves as cofactor.

The enzyme catalyses (4R,5S)-dethiobiotin + (sulfur carrier)-SH + 2 reduced [2Fe-2S]-[ferredoxin] + 2 S-adenosyl-L-methionine = (sulfur carrier)-H + biotin + 2 5'-deoxyadenosine + 2 L-methionine + 2 oxidized [2Fe-2S]-[ferredoxin]. It functions in the pathway cofactor biosynthesis; biotin biosynthesis; biotin from 7,8-diaminononanoate: step 2/2. Functionally, catalyzes the conversion of dethiobiotin (DTB) to biotin by the insertion of a sulfur atom into dethiobiotin via a radical-based mechanism. The sequence is that of Biotin synthase from Shewanella sediminis (strain HAW-EB3).